The following is a 1097-amino-acid chain: Mitochondrial distribution and morphology protein 34 (1097 aa).

One can recognise an SMP-LTD domain in the interval 1–198; the sequence is MSFNFKWPTF…LPGIIHRLSQ (198 aa). Disordered regions lie at residues 204 to 305, 317 to 343, 390 to 427, 480 to 520, 556 to 600, 645 to 675, 716 to 817, and 923 to 1097; these read EAKS…PLHS, AAFP…SGFS, QSDD…LDAV, DDQP…TSSL, PEVD…SSRT, LDAE…RDLS, GQNA…SPGV, and GSSA…AIRE. Residues 205–229 show a composition bias toward basic and acidic residues; the sequence is AKSEKDKVKQKAEAEEPPARSREPT. Over residues 252-263 the composition is skewed to basic residues; sequence RKSHSKAKKHSR. Residues 274 to 283 are compositionally biased toward low complexity; the sequence is SPCQSPQRPR. The span at 284 to 293 shows a compositional bias: basic residues; it reads QSPRRPRHVA. The segment covering 406–416 has biased composition (basic and acidic residues); that stretch reads SSSHDGKHDEG. Composition is skewed to low complexity over residues 508-519 and 572-586; these read SSRSDRSACTSS and GGTP…RFGS. Residues 662 to 675 are compositionally biased toward polar residues; it reads TNPTSRESSYRDLS. The segment covering 759 to 779 has biased composition (low complexity); it reads GMSATPARTRASAAASARSRP. Over residues 784-796 the composition is skewed to polar residues; that stretch reads YATSPPGDSSGWQ. The span at 923–943 shows a compositional bias: low complexity; the sequence is GSSAASGTGTTSGSSQTGANA. The segment covering 1004–1024 has biased composition (polar residues); sequence SNKPNNTSTGQGEDSQDNSAA. The span at 1045 to 1059 shows a compositional bias: low complexity; it reads ASGSSASSAITDSSS.

This sequence belongs to the MDM34 family. As to quaternary structure, component of the ER-mitochondria encounter structure (ERMES) or MDM complex, composed of MMM1, MDM10, MDM12 and MDM34.

Its subcellular location is the mitochondrion outer membrane. Its function is as follows. Component of the ERMES/MDM complex, which serves as a molecular tether to connect the endoplasmic reticulum (ER) and mitochondria. Components of this complex are involved in the control of mitochondrial shape and protein biogenesis, and function in nonvesicular lipid trafficking between the ER and mitochondria. MDM34 is required for the interaction of the ER-resident membrane protein MMM1 and the outer mitochondrial membrane-resident beta-barrel protein MDM10. This is Mitochondrial distribution and morphology protein 34 from Mycosarcoma maydis (Corn smut fungus).